The chain runs to 476 residues: NADH-quinone oxidoreductase subunit N (476 aa).

Helical transmembrane passes span 10 to 30 (AVLP…IGAI), 42 to 62 (LAIA…AVTI), 77 to 97 (FMKV…VDWL), 108 to 128 (AVLV…GDLI), 129 to 149 (ALYL…AINR), 162 to 182 (FVLG…IYGF), 202 to 222 (LVFG…AVPF), 234 to 254 (PTPV…AVFV), 268 to 288 (WQQI…FAAI), 296 to 316 (LLAY…AAGT), 323 to 343 (VLLY…CVLA), 368 to 388 (ALAL…AGFV), 392 to 412 (YVFL…GVVA), and 445 to 465 (AVLA…TPLI).

Belongs to the complex I subunit 2 family. In terms of assembly, NDH-1 is composed of 14 different subunits. Subunits NuoA, H, J, K, L, M, N constitute the membrane sector of the complex.

It is found in the cell inner membrane. The enzyme catalyses a quinone + NADH + 5 H(+)(in) = a quinol + NAD(+) + 4 H(+)(out). Functionally, NDH-1 shuttles electrons from NADH, via FMN and iron-sulfur (Fe-S) centers, to quinones in the respiratory chain. The immediate electron acceptor for the enzyme in this species is believed to be ubiquinone. Couples the redox reaction to proton translocation (for every two electrons transferred, four hydrogen ions are translocated across the cytoplasmic membrane), and thus conserves the redox energy in a proton gradient. This chain is NADH-quinone oxidoreductase subunit N, found in Azorhizobium caulinodans (strain ATCC 43989 / DSM 5975 / JCM 20966 / LMG 6465 / NBRC 14845 / NCIMB 13405 / ORS 571).